Reading from the N-terminus, the 335-residue chain is Glycerol-3-phosphate dehydrogenase [NAD(P)+] (335 aa).

NADPH is bound by residues W14, R33, and K111. The sn-glycerol 3-phosphate site is built by K111, G140, and S142. A144 contacts NADPH. Residues K195, D248, S258, R259, and N260 each contribute to the sn-glycerol 3-phosphate site. The Proton acceptor role is filled by K195. R259 lines the NADPH pocket. 2 residues coordinate NADPH: V283 and E285.

This sequence belongs to the NAD-dependent glycerol-3-phosphate dehydrogenase family.

Its subcellular location is the cytoplasm. The enzyme catalyses sn-glycerol 3-phosphate + NAD(+) = dihydroxyacetone phosphate + NADH + H(+). It catalyses the reaction sn-glycerol 3-phosphate + NADP(+) = dihydroxyacetone phosphate + NADPH + H(+). Its pathway is membrane lipid metabolism; glycerophospholipid metabolism. Catalyzes the reduction of the glycolytic intermediate dihydroxyacetone phosphate (DHAP) to sn-glycerol 3-phosphate (G3P), the key precursor for phospholipid synthesis. This Burkholderia mallei (strain NCTC 10247) protein is Glycerol-3-phosphate dehydrogenase [NAD(P)+].